A 172-amino-acid chain; its full sequence is Calcium channel flower homolog (172 aa).

At 1 to 32 the chain is on the cytoplasmic side; the sequence is MSSSGGAPGASASSAPPAQEEGMTWWYRWLCR. Residues 33–53 traverse the membrane as a helical segment; sequence LSGVLGAVSCAISGLFNCITI. Residues 54–57 are Extracellular-facing; sequence HPLN. A helical membrane pass occupies residues 58–78; it reads IAAGVWMIMNAFILLLCEAPF. At 79 to 102 the chain is on the cytoplasmic side; it reads CCQFIEFANTVAEKVDRLRSWQKA. Residues 103-123 traverse the membrane as a helical segment; it reads VFYCGMAVVPIVISLTLTTLL. The Extracellular portion of the chain corresponds to 124–125; the sequence is GN. The helical transmembrane segment at 126–142 threads the bilayer; sequence AIAFATGVLYGLSALGK. Over 143 to 172 the chain is Cytoplasmic; it reads KGDAISYARIQQQRQQADEEKLAETLEGEL.

It belongs to the calcium channel flower family. In terms of assembly, interacts with adaptor protein complex 2 (AP-2). As to expression, detected in skin cells at low levels of expression (at protein level).

The protein resides in the cell membrane. Its subcellular location is the cytoplasmic vesicle. The protein localises to the secretory vesicle. It is found in the synaptic vesicle. It localises to the golgi apparatus. The protein resides in the vesicle. Its subcellular location is the early endosome. The protein localises to the recycling endosome. It is found in the endoplasmic reticulum membrane. Functionally, transmembrane protein which mediates synaptic endocytosis and fitness-based cell culling. In response to different stimulus strengths, controls two major modes of synaptic vesicle (SV) retrieval in hippocampal neurons; Clathrin-mediated endocytosis (CME) in response to mild stimulation and activity-dependent bulk endocytosis (ADBE) in response to strong stimulation. In cytotoxic T-lymphoocytes (CTLs) facilitates calcium-dependent endocytosis of cytotoxic granules at the immuno synapse. Different isoforms work as fitness fingerprints in 'loser' and 'winner' cells and thereby mediate win/lose decisions as part of the cell competition process. Functions with the other flower isoforms to produce tissue-specific fitness fingerprints that identify unfit or fit cells during cell selection processes in order to maintain tissue health. During cell competition, if levels of this isoform in cells is higher than in the surrounding neighboring cells, the cells are recognized as 'winner' cells, and do not undergo elimination via apoptosis. Its function is as follows. Functions with the other flower isoforms to produce tissue-specific fitness fingerprints that identify unfit or fit cells during cell selection processes in order to maintain tissue health. During cell competition, if levels of this isoform in unfit cells is higher than in the surrounding neighboring cells, the cells are recognized as 'loser' cells, and undergo elimination via apoptosis to be replaced by the surrounding healthy 'winner' cell population. The polypeptide is Calcium channel flower homolog (CACFD1) (Homo sapiens (Human)).